The primary structure comprises 124 residues: p53-regulated apoptosis-inducing protein 1 (124 aa).

Residues 1–16 show a composition bias toward polar residues; sequence MGSSSEASFRSAQASC. A disordered region spans residues 1 to 46; the sequence is MGSSSEASFRSAQASCSGARRQGLGRGDQNLSVMPPNGRAQTHTPG.

As to expression, only found to be expressed in thymus.

The protein localises to the mitochondrion. In terms of biological role, may play an important role in mediating p53/TP53-dependent apoptosis. The polypeptide is p53-regulated apoptosis-inducing protein 1 (TP53AIP1) (Homo sapiens (Human)).